The sequence spans 150 residues: MPKYYCDYCKSYLTHDTMSVRKSHLQGRNHIKFYCDYYEAKAKETNIWNPSSIPYEITLEKLNRYSDAKKSNGSSEDNMDIDKKENSSDHNKGNVVNHSDAGNDNDDDDDEMIFLPPPPNLSGLPLPTAAVYNNQKEYQKAILRQTLTKS.

The Matrin-type zinc-finger motif lies at 4 to 36 (YYCDYCKSYLTHDTMSVRKSHLQGRNHIKFYCD). The tract at residues 66–127 (SDAKKSNGSS…PPNLSGLPLP (62 aa)) is disordered. A compositionally biased stretch (basic and acidic residues) spans 80–92 (DIDKKENSSDHNK). Over residues 103–112 (NDNDDDDDEM) the composition is skewed to acidic residues.

Belongs to the U1 small nuclear ribonucleoprotein C family. As to quaternary structure, U1 snRNP is composed of the 7 core Sm proteins B/B', D1, D2, D3, E, F and G that assemble in a heptameric protein ring on the Sm site of the small nuclear RNA to form the core snRNP, and at least 3 U1 snRNP-specific proteins U1-70K, U1-A and U1-C. U1-C interacts with U1 snRNA and the 5' splice-site region of the pre-mRNA.

The protein resides in the nucleus. Functionally, component of the spliceosomal U1 snRNP, which is essential for recognition of the pre-mRNA 5' splice-site and the subsequent assembly of the spliceosome. U1-C is directly involved in initial 5' splice-site recognition for both constitutive and regulated alternative splicing. The interaction with the 5' splice-site seems to precede base-pairing between the pre-mRNA and the U1 snRNA. Stimulates commitment or early (E) complex formation by stabilizing the base pairing of the 5' end of the U1 snRNA and the 5' splice-site region. The sequence is that of U1 small nuclear ribonucleoprotein C from Candida albicans (strain WO-1) (Yeast).